The sequence spans 274 residues: Diaminopimelate epimerase (274 aa).

The substrate site is built by N11, Q44, and N64. The active-site Proton donor is C73. Substrate contacts are provided by residues 74–75, N157, N190, and 208–209; these read GN and ER. Catalysis depends on C217, which acts as the Proton acceptor. 218–219 serves as a coordination point for substrate; sequence GS.

The protein belongs to the diaminopimelate epimerase family. As to quaternary structure, homodimer.

Its subcellular location is the cytoplasm. The catalysed reaction is (2S,6S)-2,6-diaminopimelate = meso-2,6-diaminopimelate. It functions in the pathway amino-acid biosynthesis; L-lysine biosynthesis via DAP pathway; DL-2,6-diaminopimelate from LL-2,6-diaminopimelate: step 1/1. In terms of biological role, catalyzes the stereoinversion of LL-2,6-diaminopimelate (L,L-DAP) to meso-diaminopimelate (meso-DAP), a precursor of L-lysine and an essential component of the bacterial peptidoglycan. The polypeptide is Diaminopimelate epimerase (Mannheimia succiniciproducens (strain KCTC 0769BP / MBEL55E)).